Consider the following 380-residue polypeptide: Probable protein phosphatase 2C 63 (380 aa).

In terms of domain architecture, PPM-type phosphatase spans 35 to 338 (DYSIAVVQAN…DDISVIVVYL (304 aa)). Residues Asp66, Gly67, Asp270, and Asp329 each contribute to the Mn(2+) site.

This sequence belongs to the PP2C family. The cofactor is Mg(2+). Mn(2+) serves as cofactor.

It catalyses the reaction O-phospho-L-seryl-[protein] + H2O = L-seryl-[protein] + phosphate. The enzyme catalyses O-phospho-L-threonyl-[protein] + H2O = L-threonyl-[protein] + phosphate. May dephosphorylate and repress plasma membrane H(+)-ATPases (PM H(+)-ATPases, e.g. AHA1 and AHA2), thus influencing negatively plant growth and fitness. The polypeptide is Probable protein phosphatase 2C 63 (Arabidopsis thaliana (Mouse-ear cress)).